We begin with the raw amino-acid sequence, 189 residues long: Chitin synthase 1 (189 aa).

The protein belongs to the chitin synthase family.

It is found in the cell membrane. It catalyses the reaction [(1-&gt;4)-N-acetyl-beta-D-glucosaminyl](n) + UDP-N-acetyl-alpha-D-glucosamine = [(1-&gt;4)-N-acetyl-beta-D-glucosaminyl](n+1) + UDP + H(+). Its function is as follows. Polymerizes chitin, a structural polymer of the cell wall and septum, by transferring the sugar moiety of UDP-GlcNAc to the non-reducing end of the growing chitin polymer. In Xylohypha bantiana, this protein is Chitin synthase 1 (CHS1).